Consider the following 279-residue polypeptide: Urease accessory protein UreD (279 aa).

The protein belongs to the UreD family. UreD, UreF and UreG form a complex that acts as a GTP-hydrolysis-dependent molecular chaperone, activating the urease apoprotein by helping to assemble the nickel containing metallocenter of UreC. The UreE protein probably delivers the nickel.

It localises to the cytoplasm. Required for maturation of urease via the functional incorporation of the urease nickel metallocenter. In Paracoccus denitrificans (strain Pd 1222), this protein is Urease accessory protein UreD.